A 205-amino-acid polypeptide reads, in one-letter code: MCKGLAGLPASCLRSAKDMKHRLGFLLQKSDSCEHSSSHSKKDKVVTCQRVSQEEVKKWAESLENLINHECGLAAFKAFLKSEYSEENIDFWISCEEYKKIKSPSKLSPKAKKIYNEFISVQATKEVNLDSCTREETSRNMLEPTITCFDEAQKKIFNLMEKDSYRRFLKSRFYLDLTNPSSCGAEKQKGAKSSADCTSLVPQCA.

Residues cysteine 2, cysteine 12, and cysteine 95 are each lipidated (S-palmitoyl cysteine). Positions 62-178 (SLENLINHEC…LKSRFYLDLT (117 aa)) constitute an RGS domain.

Either Cys-2 or Cys-12 or both are palmitoylated. Post-translationally, phosphorylated by cyclic GMP-dependent protein kinase.

Inhibits signal transduction by increasing the GTPase activity of G protein alpha subunits thereby driving them into their inactive GDP-bound form. Activity on G(z)-alpha is inhibited by phosphorylation of the G-protein. Activity on G(z)-alpha and G(i)-alpha-1 is inhibited by palmitoylation of the G-protein. In Rattus norvegicus (Rat), this protein is Regulator of G-protein signaling 4 (Rgs4).